Here is a 491-residue protein sequence, read N- to C-terminus: Katanin p60 ATPase-containing subunit A1 (491 aa).

Residues 1–29 are interaction with KATNB1; sequence MSLLMISENVKLAREYALLGNYDSAMVYY. Residues 1–75 are interaction with dynein and NDEL1; the sequence is MSLLMISENV…VKDIMKTLES (75 aa). Residues 1–185 form an interaction with microtubules region; the sequence is MSLLMISENV…EPETNKFDST (185 aa). Phosphoserine; by DYRK2 occurs at positions 42 and 109. Residues 87-185 form a disordered region; the sequence is QHDLPASEGE…EPETNKFDST (99 aa). At threonine 133 the chain carries Phosphothreonine; by DYRK2. Residues 145–169 show a composition bias toward basic and acidic residues; it reads HNDRGKAVRCREKKEQNKGREEKNK. A Phosphoserine modification is found at serine 170. 249–256 is a binding site for ATP; it reads GPPGTGKT.

Belongs to the AAA ATPase family. Katanin p60 subunit A1 subfamily. As to quaternary structure, can homooligomerize into hexameric rings, which may be promoted by interaction with microtubules. Interacts with KATNB1, which may serve as a targeting subunit. Interacts with ASPM; the katanin complex formation KATNA1:KATNB1 is required for the association of ASPM Interacts with dynein and NDEL1. Associates with the E3 ligase complex containing DYRK2, EDD/UBR5, DDB1 and DCAF1 proteins (EDVP complex). Interacts with KLHL42 (via the kelch domains). Interacts with CUL3; the interaction is enhanced by KLHL42. Interacts with KATNB1 and KATNBL1. Interacts with CAMSAP2 and CAMSAP3; leading to regulate the length of CAMSAP-decorated microtubule stretches. Post-translationally, phosphorylation by DYRK2 triggers ubiquitination and subsequent degradation. Ubiquitinated by the BCR(KLHL42) E3 ubiquitin ligase complex, leading to its proteasomal degradation. Ubiquitinated by the EDVP E3 ligase complex and subsequently targeted for proteasomal degradation.

It localises to the cytoplasm. The protein localises to the midbody. Its subcellular location is the cytoskeleton. The protein resides in the microtubule organizing center. It is found in the centrosome. It localises to the spindle pole. The protein localises to the spindle. The enzyme catalyses n ATP + n H2O + a microtubule = n ADP + n phosphate + (n+1) alpha/beta tubulin heterodimers.. Its activity is regulated as follows. ATPase activity is stimulated by microtubules, which promote homooligomerization. ATP-dependent microtubule severing is stimulated by interaction with KATNB1. Its function is as follows. Catalytic subunit of a complex which severs microtubules in an ATP-dependent manner. Microtubule severing may promote rapid reorganization of cellular microtubule arrays and the release of microtubules from the centrosome following nucleation. Microtubule release from the mitotic spindle poles may allow depolymerization of the microtubule end proximal to the spindle pole, leading to poleward microtubule flux and poleward motion of chromosome. Microtubule release within the cell body of neurons may be required for their transport into neuronal processes by microtubule-dependent motor proteins. This transport is required for axonal growth. The chain is Katanin p60 ATPase-containing subunit A1 from Macaca fascicularis (Crab-eating macaque).